The following is a 117-amino-acid chain: Hemerythrin subunit alpha (117 aa).

Positions 24, 53, 57, 72, 76, 105, and 110 each coordinate Fe cation.

It belongs to the hemerythrin family. In terms of assembly, octamer composed of two types of chains: alpha and beta.

Functionally, hemerythrin is a respiratory protein in blood cells of certain marine worms. The oxygen-binding site in each chain contains two iron atoms. This chain is Hemerythrin subunit alpha, found in Lingula anatina (Brachiopod).